Consider the following 817-residue polypeptide: Kinesin-like protein 2 (817 aa).

The segment at 1–155 is disordered; it reads MEEEGHKSLT…YNDEKSVNAS (155 aa). The span at 8–23 shows a compositional bias: low complexity; sequence SLTSHLPQSSSSLSQS. The segment covering 39-60 has biased composition (polar residues); that stretch reads IKTNSSSSNILKPRLSLQNEVN. Over residues 76–86 the composition is skewed to low complexity; that stretch reads SLASVKSSSLA. Residues 106 to 116 show a composition bias toward polar residues; that stretch reads PISSRSVSASS. The segment covering 122 to 132 has biased composition (low complexity); the sequence is ASAVSSSLNSS. Residues 155 to 242 are a coiled coil; it reads SALRTTEDRL…VSQKGMESLE (88 aa). ATP contacts are provided by Asn473, Arg475, Arg479, Glu543, Gly566, Ser567, Gly568, Lys569, Thr570, and Thr778. Positions 473 to 807 constitute a Kinesin motor domain; it reads NIRVFCRVRP…LRFATKVNNT (335 aa).

It belongs to the TRAFAC class myosin-kinesin ATPase superfamily. Kinesin family. NCD subfamily.

It is found in the cytoplasm. The protein resides in the cytoskeleton. Its subcellular location is the spindle. The protein localises to the nucleus. It carries out the reaction ATP + H2O = ADP + phosphate + H(+). The catalysed reaction is ATP + H2O + a kinesin associated with a microtubule at position (n) = ADP + phosphate + a kinesin associated with a microtubule at position (n-1, toward the minus end).. Its function is as follows. Minus end-directed microtubule (MT) motor that is involved in spindle microtubule shortening, kinetochore capture, and polarization of cytoplasmic microtubules. During mitosis, promotes spindle microtubule shortening by depolymerization. During metaphase, involved in the recapture of kinetochores displaced from the spindle and their transport towards the spindle pole body; promotes transport both by microtubule end-on pulling and by lateral sliding along the side of the microtubule. During interphase, required for the polarization of cytoplasmic microtubules where it orients the microtubule plus ends toward the cell ends and the minus ends toward the cell center. Required for karyogamy. The polypeptide is Kinesin-like protein 2 (Schizosaccharomyces pombe (strain 972 / ATCC 24843) (Fission yeast)).